A 267-amino-acid polypeptide reads, in one-letter code: Orotidine 5'-phosphate decarboxylase (267 aa).

Lysine 93 serves as the catalytic Proton donor.

It belongs to the OMP decarboxylase family. Type 2 subfamily.

It catalyses the reaction orotidine 5'-phosphate + H(+) = UMP + CO2. It functions in the pathway pyrimidine metabolism; UMP biosynthesis via de novo pathway; UMP from orotate: step 2/2. The chain is Orotidine 5'-phosphate decarboxylase from Herpetosiphon aurantiacus (strain ATCC 23779 / DSM 785 / 114-95).